Here is a 447-residue protein sequence, read N- to C-terminus: N-succinylarginine dihydrolase (447 aa).

Residues 21–30 (AGLAHGNVAS), Asn-112, and 139–140 (HR) contribute to the substrate site. The active site involves Glu-176. Arg-215 is a substrate binding site. The active site involves His-251. Asp-253 and Asn-364 together coordinate substrate. Cys-370 (nucleophile) is an active-site residue.

The protein belongs to the succinylarginine dihydrolase family. In terms of assembly, homodimer.

The enzyme catalyses N(2)-succinyl-L-arginine + 2 H2O + 2 H(+) = N(2)-succinyl-L-ornithine + 2 NH4(+) + CO2. Its pathway is amino-acid degradation; L-arginine degradation via AST pathway; L-glutamate and succinate from L-arginine: step 2/5. Its function is as follows. Catalyzes the hydrolysis of N(2)-succinylarginine into N(2)-succinylornithine, ammonia and CO(2). The chain is N-succinylarginine dihydrolase from Chromohalobacter salexigens (strain ATCC BAA-138 / DSM 3043 / CIP 106854 / NCIMB 13768 / 1H11).